Reading from the N-terminus, the 591-residue chain is Probable translation initiation factor IF-2 (591 aa).

One can recognise a tr-type G domain in the interval 6 to 220 (IRTPIVCVMG…IMIGLAQRYM (215 aa)). The segment at 15–22 (GHVDHGKT) is G1. Residue 15–22 (GHVDHGKT) participates in GTP binding. The segment at 40-44 (AITQH) is G2. Residues 76 to 79 (DTPG) are G3. Residues 76–80 (DTPGH) and 130–133 (TKVD) contribute to the GTP site. A G4 region spans residues 130–133 (TKVD). The segment at 198–200 (SAH) is G5.

Belongs to the TRAFAC class translation factor GTPase superfamily. Classic translation factor GTPase family. IF-2 subfamily.

Its function is as follows. Function in general translation initiation by promoting the binding of the formylmethionine-tRNA to ribosomes. Seems to function along with eIF-2. In Methanoregula boonei (strain DSM 21154 / JCM 14090 / 6A8), this protein is Probable translation initiation factor IF-2.